The chain runs to 178 residues: uncharacterized protein (178 aa).

2 disordered regions span residues 89–115 (NEEQGHQRSASHGSTSSATSTPKRLSI) and 136–178 (DMPT…EIKA). A compositionally biased stretch (low complexity) spans 98–109 (ASHGSTSSATST). Over residues 167-178 (DSDEEEEEEIKA) the composition is skewed to acidic residues.

It localises to the cytoplasm. The protein resides in the nucleus. This is an uncharacterized protein from Schizosaccharomyces pombe (strain 972 / ATCC 24843) (Fission yeast).